We begin with the raw amino-acid sequence, 472 residues long: 3beta,22alpha-dihydroxysteroid 3-dehydrogenase (472 aa).

A helical membrane pass occupies residues 1 to 21 (MAFTAFLLLLSSIAAGFLLLL). Cys418 provides a ligand contact to heme.

The protein belongs to the cytochrome P450 family. Heme serves as cofactor.

It is found in the membrane. The catalysed reaction is (22S)-22-hydroxycampesterol + reduced [NADPH--hemoprotein reductase] + O2 = (22S)-22-hydroxycampest-4-en-3-one + oxidized [NADPH--hemoprotein reductase] + 2 H2O + H(+). It catalyses the reaction 6-deoxoteasterone + reduced [NADPH--hemoprotein reductase] + O2 = 3-dehydro-6-deoxoteasterone + oxidized [NADPH--hemoprotein reductase] + 2 H2O + H(+). The enzyme catalyses 6-deoxycathasterone + reduced [NADPH--hemoprotein reductase] + O2 = (22S,24R)-22-hydroxy-5alpha-ergostan-3-one + oxidized [NADPH--hemoprotein reductase] + 2 H2O + H(+). It carries out the reaction (22R,23R)-22,23-dihydroxycampesterol + reduced [NADPH--hemoprotein reductase] + O2 = (22R,23R)-22,23-dihydroxycampest-4-en-3-one + oxidized [NADPH--hemoprotein reductase] + 2 H2O + H(+). The protein operates within plant hormone biosynthesis; brassinosteroid biosynthesis. Catalyzes C3-oxidation steps in brassinosteroids biosynthesis. Converts (22S)-22-hydroxycampesterol (22-OHCR) to (22S,24R)-22-hydroxyergost-4-en-3-one (22-hydroxy-campesta-4-en-3-one, 22-OH-4-en-3-one), 6-deoxocathasterone (6-deoxoCT) to (22S,24R)-22-hydroxy-5alpha-ergostan-3-one (22-hydroxy-campesta-3-one, 22-OH-3-one), (22R,23R)-22,23-dihydroxycampesterol (22,23-diOHCR) to (22R,23R)-22,23-dihydroxy-campest-4-en-3-one (22,23-diOH-4-en-3-one), and 6-deoxoteasterone (6-deoxoTE) to 3-dehydro-6-deoxoteasterone (6-deoxo3DT, 6-deoxo-3-DHT). This Arabidopsis thaliana (Mouse-ear cress) protein is 3beta,22alpha-dihydroxysteroid 3-dehydrogenase.